The sequence spans 134 residues: Small ribosomal subunit protein uS8c (134 aa).

Belongs to the universal ribosomal protein uS8 family. As to quaternary structure, part of the 30S ribosomal subunit.

The protein resides in the plastid. Its subcellular location is the chloroplast. One of the primary rRNA binding proteins, it binds directly to 16S rRNA central domain where it helps coordinate assembly of the platform of the 30S subunit. This is Small ribosomal subunit protein uS8c (rps8) from Arabis hirsuta (Hairy rock-cress).